Here is a 182-residue protein sequence, read N- to C-terminus: MINSMQFLYLVASYLIGNILTAYIVTKLRHNVDIRDEGSGNPGARNMGRVYGKGYFIATFLGDAIKGAIVVAVAKYLFEDPTFVMLTLLAVIIGHIYPVLFKGKGGKGISTFIGGLIAFDYLIALTLLGIFIVFYLIFKGFTKPGLITIACLPICMILYSYSIVTTILSGIIIVLILYVNRE.

Helical transmembrane passes span methionine 5–valine 25, glycine 54–alanine 74, proline 81–phenylalanine 101, isoleucine 117–isoleucine 137, and isoleucine 157–leucine 177.

It belongs to the PlsY family. In terms of assembly, probably interacts with PlsX.

It is found in the cell membrane. It carries out the reaction an acyl phosphate + sn-glycerol 3-phosphate = a 1-acyl-sn-glycero-3-phosphate + phosphate. It participates in lipid metabolism; phospholipid metabolism. Its function is as follows. Catalyzes the transfer of an acyl group from acyl-phosphate (acyl-PO(4)) to glycerol-3-phosphate (G3P) to form lysophosphatidic acid (LPA). This enzyme utilizes acyl-phosphate as fatty acyl donor, but not acyl-CoA or acyl-ACP. In Bacillus cereus (strain ATCC 14579 / DSM 31 / CCUG 7414 / JCM 2152 / NBRC 15305 / NCIMB 9373 / NCTC 2599 / NRRL B-3711), this protein is Glycerol-3-phosphate acyltransferase 1.